Reading from the N-terminus, the 176-residue chain is Ribosome maturation factor RimM (176 aa).

Residues glutamate 100–leucine 173 enclose the PRC barrel domain.

Belongs to the RimM family. Binds ribosomal protein uS19.

The protein resides in the cytoplasm. Functionally, an accessory protein needed during the final step in the assembly of 30S ribosomal subunit, possibly for assembly of the head region. Essential for efficient processing of 16S rRNA. May be needed both before and after RbfA during the maturation of 16S rRNA. It has affinity for free ribosomal 30S subunits but not for 70S ribosomes. The protein is Ribosome maturation factor RimM of Prochlorococcus marinus (strain MIT 9313).